Consider the following 160-residue polypeptide: SsrA-binding protein (160 aa).

The tract at residues 131-160 (KKEYDKRHTERERDSDRELQRAVRTKGKED) is disordered.

It belongs to the SmpB family.

It is found in the cytoplasm. Functionally, required for rescue of stalled ribosomes mediated by trans-translation. Binds to transfer-messenger RNA (tmRNA), required for stable association of tmRNA with ribosomes. tmRNA and SmpB together mimic tRNA shape, replacing the anticodon stem-loop with SmpB. tmRNA is encoded by the ssrA gene; the 2 termini fold to resemble tRNA(Ala) and it encodes a 'tag peptide', a short internal open reading frame. During trans-translation Ala-aminoacylated tmRNA acts like a tRNA, entering the A-site of stalled ribosomes, displacing the stalled mRNA. The ribosome then switches to translate the ORF on the tmRNA; the nascent peptide is terminated with the 'tag peptide' encoded by the tmRNA and targeted for degradation. The ribosome is freed to recommence translation, which seems to be the essential function of trans-translation. This chain is SsrA-binding protein, found in Pseudomonas fluorescens (strain ATCC BAA-477 / NRRL B-23932 / Pf-5).